Consider the following 434-residue polypeptide: Eukaryotic translation initiation factor 3 subunit E-1 (434 aa).

One can recognise a PCI domain in the interval 219 to 392; it reads FFNHPKGRDL…GHVVMGTQPL (174 aa).

It belongs to the eIF-3 subunit E family. Component of the eukaryotic translation initiation factor 3 (eIF-3) complex. The eIF-3 complex interacts with pix. Interacts with mxt.

The protein resides in the cytoplasm. Functionally, component of the eukaryotic translation initiation factor 3 (eIF-3) complex, which is involved in protein synthesis of a specialized repertoire of mRNAs and, together with other initiation factors, stimulates binding of mRNA and methionyl-tRNAi to the 40S ribosome. The eIF-3 complex specifically targets and initiates translation of a subset of mRNAs involved in cell proliferation. In Drosophila willistoni (Fruit fly), this protein is Eukaryotic translation initiation factor 3 subunit E-1 (eIF3-S6-1).